A 709-amino-acid chain; its full sequence is Polyribonucleotide nucleotidyltransferase (709 aa).

D489 and D495 together coordinate Mg(2+). The region spanning 556 to 615 (PKIDMIKIDVDKIKVVIGKGGETIDKIIAETGVKIDIDEEGNVSIFSSDQAAIDRTKDII) is the KH domain. An S1 motif domain is found at 625–693 (GEVYHAKVVR…DKGRVDASMK (69 aa)).

It belongs to the polyribonucleotide nucleotidyltransferase family. The cofactor is Mg(2+).

It localises to the cytoplasm. It carries out the reaction RNA(n+1) + phosphate = RNA(n) + a ribonucleoside 5'-diphosphate. Its function is as follows. Involved in mRNA degradation. Catalyzes the phosphorolysis of single-stranded polyribonucleotides processively in the 3'- to 5'-direction. This chain is Polyribonucleotide nucleotidyltransferase, found in Streptococcus agalactiae serotype Ia (strain ATCC 27591 / A909 / CDC SS700).